Reading from the N-terminus, the 673-residue chain is Translation factor GUF1 homolog, mitochondrial (673 aa).

In terms of domain architecture, tr-type G spans 68-260 (ERIRNFSIIA…AVIERIPSPP (193 aa)). GTP-binding positions include 77-84 (AHVDHGKS), 153-157 (DTPGH), and 207-210 (NKID).

It belongs to the TRAFAC class translation factor GTPase superfamily. Classic translation factor GTPase family. LepA subfamily.

Its subcellular location is the mitochondrion inner membrane. The catalysed reaction is GTP + H2O = GDP + phosphate + H(+). In terms of biological role, promotes mitochondrial protein synthesis. May act as a fidelity factor of the translation reaction, by catalyzing a one-codon backward translocation of tRNAs on improperly translocated ribosomes. Binds to mitochondrial ribosomes in a GTP-dependent manner. This chain is Translation factor GUF1 homolog, mitochondrial, found in Ricinus communis (Castor bean).